Reading from the N-terminus, the 89-residue chain is MSEQGDLNQAIAEEGGTEQETATPENGIVKSESLDEEEKLELQRRLEAQNQERRKSKSGAGKGKLTRSLAVCEESSARPGGESLQDQTL.

Residues 1–89 form a disordered region; it reads MSEQGDLNQA…GGESLQDQTL (89 aa). Ser-2 carries the post-translational modification N-acetylserine. Residues 9–25 show a composition bias toward low complexity; that stretch reads QAIAEEGGTEQETATPE. Ser-33 carries the post-translational modification Phosphoserine. Residues 40-53 are compositionally biased toward basic and acidic residues; it reads LELQRRLEAQNQER. Ser-56 carries the phosphoserine modification.

In terms of assembly, interacts with CALM1. Phosphorylation at Ser-56 favors interaction with CALM1.

The protein resides in the cytoplasm. Functionally, may act as a competitive inhibitor of calmodulin-dependent enzymes such as calcineurin in neurons. The protein is cAMP-regulated phosphoprotein 21 (ARPP21) of Pongo abelii (Sumatran orangutan).